The sequence spans 389 residues: Succinate--CoA ligase [ADP-forming] subunit beta (389 aa).

The ATP-grasp domain maps to 9 to 244 (KEILRKFGVA…LDEEDPAEVE (236 aa)). ATP is bound by residues lysine 46, 53–55 (GRG), glutamate 99, alanine 102, and glutamate 107. Positions 199 and 213 each coordinate Mg(2+). Residues asparagine 264 and 321-323 (GIM) contribute to the substrate site.

The protein belongs to the succinate/malate CoA ligase beta subunit family. Heterotetramer of two alpha and two beta subunits. The cofactor is Mg(2+).

It catalyses the reaction succinate + ATP + CoA = succinyl-CoA + ADP + phosphate. It carries out the reaction GTP + succinate + CoA = succinyl-CoA + GDP + phosphate. The protein operates within carbohydrate metabolism; tricarboxylic acid cycle; succinate from succinyl-CoA (ligase route): step 1/1. In terms of biological role, succinyl-CoA synthetase functions in the citric acid cycle (TCA), coupling the hydrolysis of succinyl-CoA to the synthesis of either ATP or GTP and thus represents the only step of substrate-level phosphorylation in the TCA. The beta subunit provides nucleotide specificity of the enzyme and binds the substrate succinate, while the binding sites for coenzyme A and phosphate are found in the alpha subunit. The sequence is that of Succinate--CoA ligase [ADP-forming] subunit beta from Paraburkholderia xenovorans (strain LB400).